Reading from the N-terminus, the 424-residue chain is GTPase Obg (424 aa).

The region spanning 1 to 159 is the Obg domain; it reads MVFIDTARIY…MWVRLELKLL (159 aa). The region spanning 160 to 330 is the OBG-type G domain; it reads ADVGLVGFPN…LLDKTIEILS (171 aa). Residues 166–173, 191–195, 212–215, 282–285, and 311–313 each bind GTP; these read GFPNAGKS, FTTLT, DIPG, NKMD, and SAL. Mg(2+)-binding residues include serine 173 and threonine 193. One can recognise an OCT domain in the interval 347-424; sequence NPPEEEETLE…VRDFEFEYYE (78 aa).

Belongs to the TRAFAC class OBG-HflX-like GTPase superfamily. OBG GTPase family. In terms of assembly, monomer. The cofactor is Mg(2+).

It is found in the cytoplasm. In terms of biological role, an essential GTPase which binds GTP, GDP and possibly (p)ppGpp with moderate affinity, with high nucleotide exchange rates and a fairly low GTP hydrolysis rate. Plays a role in control of the cell cycle, stress response, ribosome biogenesis and in those bacteria that undergo differentiation, in morphogenesis control. This chain is GTPase Obg, found in Caldanaerobacter subterraneus subsp. tengcongensis (strain DSM 15242 / JCM 11007 / NBRC 100824 / MB4) (Thermoanaerobacter tengcongensis).